A 127-amino-acid chain; its full sequence is Small ribosomal subunit protein uS11 (127 aa).

This sequence belongs to the universal ribosomal protein uS11 family. Part of the 30S ribosomal subunit. Interacts with proteins S7 and S18. Binds to IF-3.

Located on the platform of the 30S subunit, it bridges several disparate RNA helices of the 16S rRNA. Forms part of the Shine-Dalgarno cleft in the 70S ribosome. The chain is Small ribosomal subunit protein uS11 from Streptococcus agalactiae serotype Ia (strain ATCC 27591 / A909 / CDC SS700).